The primary structure comprises 634 residues: 1-deoxy-D-xylulose-5-phosphate synthase (634 aa).

Thiamine diphosphate contacts are provided by residues His-74 and 115–117; that span reads AHS. Residue Asp-146 participates in Mg(2+) binding. Thiamine diphosphate is bound by residues 147 to 148, Asn-176, Tyr-283, and Glu-365; that span reads GA. Asn-176 provides a ligand contact to Mg(2+).

This sequence belongs to the transketolase family. DXPS subfamily. In terms of assembly, homodimer. Requires Mg(2+) as cofactor. Thiamine diphosphate serves as cofactor.

The catalysed reaction is D-glyceraldehyde 3-phosphate + pyruvate + H(+) = 1-deoxy-D-xylulose 5-phosphate + CO2. Its pathway is metabolic intermediate biosynthesis; 1-deoxy-D-xylulose 5-phosphate biosynthesis; 1-deoxy-D-xylulose 5-phosphate from D-glyceraldehyde 3-phosphate and pyruvate: step 1/1. In terms of biological role, catalyzes the acyloin condensation reaction between C atoms 2 and 3 of pyruvate and glyceraldehyde 3-phosphate to yield 1-deoxy-D-xylulose-5-phosphate (DXP). The polypeptide is 1-deoxy-D-xylulose-5-phosphate synthase (Burkholderia mallei (strain ATCC 23344)).